Reading from the N-terminus, the 399-residue chain is Forkhead box protein A4 (399 aa).

The segment at residues 119 to 213 (KPPYSYISLI…ENGCYLRRQK (95 aa)) is a DNA-binding region (fork-head). Positions 219–234 (RSKSGEREKKVNKPGD) are enriched in basic and acidic residues. Positions 219-290 (RSKSGEREKK…VGLSPTSEQA (72 aa)) are disordered. Positions 267–277 (STGSSIHQASG) are enriched in polar residues.

The protein localises to the nucleus. Functionally, transcriptional repressor involved in embryonic nervous system development. Plays a role in the induction and patterning of the anterior-posterior neural axis. Involved in the establishment of floor plate differentiation from neural plate cells during gastrulation. Binds the anf1 promoter sequence to restrict expression of anf1 to the anterior of the neural plate, thereby patterning the forebrain. Can bind to the HNF-3-alpha DNA target sequence. Cooperates with t/bra in a dose-dependent manner to specify dorsal mesoderm formation, including notochord. May be involved in the dorso-ventral patterning of the mesoderm. Binds to DNA via the target sequence 5'-[GA]TAAA[TC]A-3', with 5'-GTAAATA-3' being the preferred binding site. The sequence is that of Forkhead box protein A4 from Xenopus tropicalis (Western clawed frog).